Here is a 163-residue protein sequence, read N- to C-terminus: Putative phosphinothricin acetyltransferase YwnH (163 aa).

The 158-residue stretch at 1–158 (MTLRLAEHRD…DGKRYDLKIL (158 aa)) folds into the N-acetyltransferase domain. Residues 85–87 (IYI), 94–98 (KGVGS), and 124–126 (NKP) contribute to the acetyl-CoA site.

Belongs to the acetyltransferase family. PAT/BAR subfamily.

The catalysed reaction is phosphinothricin + acetyl-CoA = N-acetylphosphinothricin + CoA + H(+). This enzyme is an effector of phosphinothricin tripeptide (PTT or bialaphos) resistance. Inactivates PTT by transfer of an acetyl group. This is Putative phosphinothricin acetyltransferase YwnH (ywnH) from Bacillus subtilis (strain 168).